The chain runs to 495 residues: Glutelin type-B 2 (495 aa).

Positions M1–A24 are cleaved as a signal peptide. Intrachain disulfides connect C45/C78 and C121/C305. Cupin type-1 domains follow at residues L50 to K245 and V311 to R460. The tract at residues N464 to E495 is disordered.

This sequence belongs to the 11S seed storage protein (globulins) family. As to quaternary structure, hexamer; each subunit is composed of an acidic and a basic chain derived from a single precursor and linked by a disulfide bond.

Functionally, seed storage protein. In Oryza sativa subsp. japonica (Rice), this protein is Glutelin type-B 2 (GLUB2).